Here is a 91-residue protein sequence, read N- to C-terminus: Small ribosomal subunit protein bS20 (91 aa).

Basic and acidic residues predominate over residues 1-18 (MPLHKSAEKRLRQSEKRN). The tract at residues 1–24 (MPLHKSAEKRLRQSEKRNVRNRAR) is disordered.

This sequence belongs to the bacterial ribosomal protein bS20 family.

Its function is as follows. Binds directly to 16S ribosomal RNA. The sequence is that of Small ribosomal subunit protein bS20 from Chlorobium phaeobacteroides (strain DSM 266 / SMG 266 / 2430).